The following is a 448-amino-acid chain: Homogentisate 1,2-dioxygenase (448 aa).

Residue histidine 303 is the Proton acceptor of the active site. Fe cation contacts are provided by histidine 346 and glutamate 352. Tyrosine 361 and histidine 382 together coordinate homogentisate. Histidine 382 is a Fe cation binding site.

It belongs to the homogentisate dioxygenase family. In terms of assembly, hexamer; dimer of trimers. The cofactor is Fe cation.

The enzyme catalyses homogentisate + O2 = 4-maleylacetoacetate + H(+). It participates in amino-acid degradation; L-phenylalanine degradation; acetoacetate and fumarate from L-phenylalanine: step 4/6. Functionally, involved in the catabolism of homogentisate (2,5-dihydroxyphenylacetate or 2,5-OH-PhAc), a central intermediate in the degradation of phenylalanine and tyrosine. Catalyzes the oxidative ring cleavage of the aromatic ring of homogentisate to yield maleylacetoacetate. The polypeptide is Homogentisate 1,2-dioxygenase (Rhodopseudomonas palustris (strain ATCC BAA-98 / CGA009)).